The sequence spans 156 residues: 3-hydroxyacyl-[acyl-carrier-protein] dehydratase FabZ (156 aa).

The active site involves His61.

This sequence belongs to the thioester dehydratase family. FabZ subfamily.

The protein localises to the cytoplasm. It carries out the reaction a (3R)-hydroxyacyl-[ACP] = a (2E)-enoyl-[ACP] + H2O. Its function is as follows. Involved in unsaturated fatty acids biosynthesis. Catalyzes the dehydration of short chain beta-hydroxyacyl-ACPs and long chain saturated and unsaturated beta-hydroxyacyl-ACPs. The sequence is that of 3-hydroxyacyl-[acyl-carrier-protein] dehydratase FabZ from Acaryochloris marina (strain MBIC 11017).